Here is a 237-residue protein sequence, read N- to C-terminus: Cytidylate kinase (237 aa).

15–23 (GPSGSGKGT) provides a ligand contact to ATP.

The protein belongs to the cytidylate kinase family. Type 1 subfamily.

The protein localises to the cytoplasm. It carries out the reaction CMP + ATP = CDP + ADP. The catalysed reaction is dCMP + ATP = dCDP + ADP. In Coxiella burnetii (strain RSA 493 / Nine Mile phase I), this protein is Cytidylate kinase.